The following is an 89-amino-acid chain: Putative membrane protein insertion efficiency factor (89 aa).

Residues 68–89 form a disordered region; that stretch reads VPPPNSDARNAPHEAEASSHRL. Residues 77 to 89 show a composition bias toward basic and acidic residues; it reads NAPHEAEASSHRL.

The protein belongs to the UPF0161 family.

Its subcellular location is the cell inner membrane. In terms of biological role, could be involved in insertion of integral membrane proteins into the membrane. In Burkholderia thailandensis (strain ATCC 700388 / DSM 13276 / CCUG 48851 / CIP 106301 / E264), this protein is Putative membrane protein insertion efficiency factor.